A 70-amino-acid polypeptide reads, in one-letter code: Peptide BmKn1 (70 aa).

A signal peptide spans methionine 1 to alanine 23. The residue at position 36 (phenylalanine 36) is a Phenylalanine amide. The propeptide occupies serine 40–tyrosine 70.

This sequence belongs to the non-disulfide-bridged peptide (NDBP) superfamily. Short antimicrobial peptide (group 4) family. In terms of tissue distribution, expressed by the venom gland.

It is found in the secreted. The protein resides in the target cell membrane. In terms of biological role, antibacterial peptide. The chain is Peptide BmKn1 from Olivierus martensii (Manchurian scorpion).